The following is a 341-amino-acid chain: Ketol-acid reductoisomerase (NADP(+)) (341 aa).

The region spanning 2–181 is the KARI N-terminal Rossmann domain; it reads AKVYYNGDAN…GATRAGVLET (180 aa). NADP(+) contacts are provided by residues 25-28, R48, S52, and 82-85; these read YGSQ and DEKQ. H107 is a catalytic residue. G133 provides a ligand contact to NADP(+). The KARI C-terminal knotted domain maps to 182 to 327; that stretch reads TFKEETETDL…RELRSMMPFV (146 aa). The Mg(2+) site is built by D190, E194, E226, and E230. Residue S251 participates in substrate binding.

It belongs to the ketol-acid reductoisomerase family. Mg(2+) serves as cofactor.

It carries out the reaction (2R)-2,3-dihydroxy-3-methylbutanoate + NADP(+) = (2S)-2-acetolactate + NADPH + H(+). It catalyses the reaction (2R,3R)-2,3-dihydroxy-3-methylpentanoate + NADP(+) = (S)-2-ethyl-2-hydroxy-3-oxobutanoate + NADPH + H(+). The protein operates within amino-acid biosynthesis; L-isoleucine biosynthesis; L-isoleucine from 2-oxobutanoate: step 2/4. It participates in amino-acid biosynthesis; L-valine biosynthesis; L-valine from pyruvate: step 2/4. Its function is as follows. Involved in the biosynthesis of branched-chain amino acids (BCAA). Catalyzes an alkyl-migration followed by a ketol-acid reduction of (S)-2-acetolactate (S2AL) to yield (R)-2,3-dihydroxy-isovalerate. In the isomerase reaction, S2AL is rearranged via a Mg-dependent methyl migration to produce 3-hydroxy-3-methyl-2-ketobutyrate (HMKB). In the reductase reaction, this 2-ketoacid undergoes a metal-dependent reduction by NADPH to yield (R)-2,3-dihydroxy-isovalerate. In Geobacillus sp. (strain WCH70), this protein is Ketol-acid reductoisomerase (NADP(+)).